The sequence spans 177 residues: Ubiquitin-conjugating enzyme E2 C (177 aa).

Residues 1–31 (MSGQNIDPAANQVRQKERPRDMTTSKERHSV) are disordered. Positions 14 to 30 (RQKERPRDMTTSKERHS) are enriched in basic and acidic residues. The 146-residue stretch at 30-175 (SVSKRLQQEL…LHEKYKTAQS (146 aa)) folds into the UBC core domain. Cys-114 acts as the Glycyl thioester intermediate in catalysis.

The protein belongs to the ubiquitin-conjugating enzyme family. Component of the APC/C complex. Post-translationally, autoubiquitinated by the APC/C complex, leading to its degradation by the proteasome.

It carries out the reaction S-ubiquitinyl-[E1 ubiquitin-activating enzyme]-L-cysteine + [E2 ubiquitin-conjugating enzyme]-L-cysteine = [E1 ubiquitin-activating enzyme]-L-cysteine + S-ubiquitinyl-[E2 ubiquitin-conjugating enzyme]-L-cysteine.. The catalysed reaction is S-ubiquitinyl-[E1 ubiquitin-activating enzyme]-L-cysteine + [acceptor protein]-L-lysine = [E1 ubiquitin-activating enzyme]-L-cysteine + N(6)-monoubiquitinyl-[acceptor protein]-L-lysine.. Its pathway is protein modification; protein ubiquitination. In terms of biological role, catalyzes the covalent attachment of ubiquitin to other proteins. Acts as an essential factor of the anaphase promoting complex/cyclosome (APC/C), a cell cycle-regulated ubiquitin ligase that is essential for the transition from metaphase to anaphase in mitosis. Involved in both degradation of proteins responsible for maintaining sister chromatid cohesion at the onset of anaphase and of mitotic cyclins A and B at the exit of mitosis. Acts by initiating polyubiquitin chains on APC/C substrates, leading to the degradation of APC/C substrates by the proteasome and promoting mitotic exit. This Spisula solidissima (Atlantic surf-clam) protein is Ubiquitin-conjugating enzyme E2 C (UBE2C).